A 121-amino-acid chain; its full sequence is NADH-quinone oxidoreductase subunit A 1 (121 aa).

3 helical membrane passes run 6–26 (FPIFVVISIAIILAVVLLSIG), 62–82 (LVAMIFIVFDIEVIFMYPWAV), and 90–110 (FYGLIPMVTFVLILLAGYYYI).

This sequence belongs to the complex I subunit 3 family. In terms of assembly, NDH-1 is composed of 14 different subunits. Subunits NuoA, H, J, K, L, M, N constitute the membrane sector of the complex.

The protein localises to the cell inner membrane. It carries out the reaction a quinone + NADH + 5 H(+)(in) = a quinol + NAD(+) + 4 H(+)(out). NDH-1 shuttles electrons from NADH, via FMN and iron-sulfur (Fe-S) centers, to quinones in the respiratory chain. The immediate electron acceptor for the enzyme in this species is believed to be a menaquinone. Couples the redox reaction to proton translocation (for every two electrons transferred, four hydrogen ions are translocated across the cytoplasmic membrane), and thus conserves the redox energy in a proton gradient. This is NADH-quinone oxidoreductase subunit A 1 from Chloroherpeton thalassium (strain ATCC 35110 / GB-78).